We begin with the raw amino-acid sequence, 640 residues long: Epithelial sodium channel subunit beta (640 aa).

At 1 to 50 the chain is on the cytoplasmic side; that stretch reads MHVKKYLLKGLHRLQKGPGYTYKELLVWYCDNTNTHGPKRIICEGPKKKA. The chain crosses the membrane as a helical span at residues 51–71; it reads MWFLLTLLFAALVCWQWGIFI. Over 72–532 the chain is Extracellular; that stretch reads RTYLSWEVSV…GGQFGFWMGG (461 aa). 9 cysteine pairs are disulfide-bonded: Cys98/Cys272, Cys184/Cys189, Cys196/Cys203, Cys249/Cys256, Cys361/Cys448, Cys386/Cys444, Cys390/Cys440, Cys399/Cys426, and Cys401/Cys415. Residue Asn260 is glycosylated (N-linked (GlcNAc...) asparagine). The helical transmembrane segment at 533 to 553 threads the bilayer; that stretch reads SVLCLIEFGEIIIDFVWITII. At 554 to 640 the chain is on the cytoplasmic side; it reads KLVALAKSLR…IESDSEGDAI (87 aa). Residues 590–640 are disordered; sequence FQPDTAPRSPNTGPYPSEQALPIPGTPPPNYDSLRLQPLDVIESDSEGDAI. The PY motif; recruits WW domain-containing proteins and is thereby required for ubiquitination and inhibition of the channel by NEDD4 and NEDD4L signature appears at 616–620; sequence PPPNY. A compositionally biased stretch (acidic residues) spans 631–640; the sequence is IESDSEGDAI. A phosphoserine mark is found at Ser633 and Ser635.

Belongs to the amiloride-sensitive sodium channel (TC 1.A.6) family. SCNN1B subfamily. In terms of assembly, component of the heterotrimeric epithelial sodium channel (ENaC) composed of an alpha/SCNN1A, a beta/SCNN1B and a gamma/SCNN1G subunit. An additional delta/SCNN1D subunit can replace the alpha/SCNN1A subunit to form an alternative channel with specific properties. Interacts with WWP1 (via WW domains). Interacts with WWP2 (via WW domains); inhibits the channel. Interacts with the full-length immature form of PCSK9 (pro-PCSK9); inhibits ENaC by promoting its proteasomal degradation. Interacts (N-glycosylated) with BPIFA1; the interaction is direct and inhibits the proteolytic processing of SCNN1A and SCNN1G and the activation of ENaC. In terms of processing, ubiquitinated. Can be ubiquitinated at multiple sites and undergo monoubiquitination and polyubiquitination. Ubiquitination by NEDD4 or NEDD4L inhibits the ENaC channel through endocytosis, intracellular retention and degradation of its individual subunits. However, some studies could not confirm the ubiquitination of this subunit of the ENaC. Post-translationally, phosphorylated on serine and threonine residues. Aldosterone and insulin increase the basal level of phosphorylation. N-glycosylated. N-glycosylation is required for interaction with BPIFA1. Detected in placenta, lung and kidney. Expressed in kidney (at protein level).

Its subcellular location is the apical cell membrane. It is found in the cytoplasmic vesicle membrane. The catalysed reaction is Na(+)(in) = Na(+)(out). With respect to regulation, originally identified and characterized by its inhibition by the diuretic drug amiloride. This is one of the three pore-forming subunits of the heterotrimeric epithelial sodium channel (ENaC), a critical regulator of sodium balance and fluid homeostasis. ENaC operates in epithelial tissues, where it mediates the electrodiffusion of sodium ions from extracellular fluid through the apical membrane of cells, with water following osmotically. It plays a key role in maintaining sodium homeostasis through electrogenic sodium reabsorption in the kidneys. Additionally, ENaC is essential for airway surface liquid homeostasis, which is crucial for proper mucus clearance. This chain is Epithelial sodium channel subunit beta, found in Homo sapiens (Human).